Here is a 904-residue protein sequence, read N- to C-terminus: Transcription factor E2F7 (904 aa).

A disordered region spans residues 61-80 (TPDRNPITPVKPVDRQPQVE). S96 bears the Phosphoserine mark. Residues 143–212 (RKQKSLGLLC…VAKNQYGWHG (70 aa)) mediate DNA binding. Residues 252–269 (GERRKDGSPDPRDPHLLD) are compositionally biased toward basic and acidic residues. The disordered stretch occupies residues 252–283 (GERRKDGSPDPRDPHLLDFSEADYPSSSANSR). A DNA-binding region spans residues 283-368 (RKDKSLRIMS…GRKPAFKWIG (86 aa)). The residue at position 411 (S411) is a Phosphoserine. The segment at 560 to 628 (LSPESRSEED…VMPKKPSSST (69 aa)) is disordered. Residue S833 is modified to Phosphoserine. The disordered stretch occupies residues 846-904 (AEQSPAPATPKSIQRRHRETFFKTPGSLGDPVFRRKERNQSRNTSSAQRRLEISSSGPD). Residues 886–904 (SRNTSSAQRRLEISSSGPD) are compositionally biased toward polar residues.

It belongs to the E2F/DP family. As to quaternary structure, interacts with HIF1A. Homodimer and heterodimer: mainly forms homodimers and, to a lesser extent, heterodimers with E2F8. Dimerization is important for DNA-binding. Interacts with MN1. Widely expressed with highest levels in skin and thymus and very low levels in brain, muscle and stomach. Expressed in trophoblast giant cells throughout placenta development (at protein level).

The protein resides in the nucleus. In terms of biological role, atypical E2F transcription factor that participates in various processes such as angiogenesis, polyploidization of specialized cells and DNA damage response. Mainly acts as a transcription repressor that binds DNA independently of DP proteins and specifically recognizes the E2 recognition site 5'-TTTC[CG]CGC-3'. Directly represses transcription of classical E2F transcription factors such as E2F1. Acts as a regulator of S-phase by recognizing and binding the E2-related site 5'-TTCCCGCC-3' and mediating repression of G1/S-regulated genes. Plays a key role in polyploidization of cells in placenta and liver by regulating the endocycle, probably by repressing genes promoting cytokinesis and antagonizing action of classical E2F proteins (E2F1, E2F2 and/or E2F3). Required for placental development by promoting polyploidization of trophoblast giant cells. Also involved in DNA damage response: up-regulated by p53/TP53 following genotoxic stress and acts as a downstream effector of p53/TP53-dependent repression by mediating repression of indirect p53/TP53 target genes involved in DNA replication. Acts as a promoter of sprouting angiogenesis, possibly by acting as a transcription activator: associates with HIF1A, recognizes and binds the VEGFA promoter, which is different from canonical E2 recognition site, and activates expression of the VEGFA gene. Acts as a negative regulator of keratinocyte differentiation. This is Transcription factor E2F7 (E2f7) from Mus musculus (Mouse).